A 330-amino-acid chain; its full sequence is Protein FAM170A (330 aa).

Disordered stretches follow at residues 1–54 (MKRR…VTST), 76–104 (HRDS…HVSL), and 169–218 (VGTP…AKTP). Positions 174–185 (SDVSTRNLLSDS) are enriched in polar residues. The segment covering 189–200 (GEEKEHEERTES) has biased composition (basic and acidic residues). Thr-217 carries the post-translational modification Phosphothreonine. A C2H2-type; degenerate zinc finger spans residues 228–252 (FRCMACCRVFTTMEALQEHVQFGIR). Positions 270 to 330 (NMESESTQDE…VFHSPKDRNS (61 aa)) are disordered. Acidic residues predominate over residues 275-293 (STQDEQEEENGNEKEEEEK). Ser-315 carries the phosphoserine modification.

Belongs to the FAM170 family. In terms of tissue distribution, expressed strongly in testis and brain and weakly in prostate, spleen, pancreas and uterus.

The protein resides in the nucleus. Its function is as follows. Acts as a nuclear transcription factor that positively regulates the expression of heat shock genes. Binds to heat shock promoter elements (HSE). The polypeptide is Protein FAM170A (FAM170A) (Homo sapiens (Human)).